We begin with the raw amino-acid sequence, 208 residues long: MGEVEISALAYVKMCLHAARYPHAAVNGLFLAPAPRSGECLCLTDCVPLFHSHLALSVMLEVALNQVDVWGAQAGLVVAGYYHANAAVNDQSPGPLALKIAGRIAEFFPDAVLIMLDNQKLVPQPRVPPVIVLENQGLRWVPKDKNLVMWRDWEESRQMVGALLEDRAHQHLVDFDCHLDDIRQDWTNQRLNTQITQWVGPTNGNGNA.

In terms of domain architecture, MPN spans 4-139 (VEISALAYVK…VIVLENQGLR (136 aa)).

Belongs to the EMC8/EMC9 family. In terms of assembly, component of the ER membrane protein complex (EMC). EMC8 and EMC9 are mutually exclusive subunits of the EMC complex.

It is found in the endoplasmic reticulum membrane. Its function is as follows. Part of the endoplasmic reticulum membrane protein complex (EMC) that enables the energy-independent insertion into endoplasmic reticulum membranes of newly synthesized membrane proteins. Preferentially accommodates proteins with transmembrane domains that are weakly hydrophobic or contain destabilizing features such as charged and aromatic residues. Involved in the cotranslational insertion of multi-pass membrane proteins in which stop-transfer membrane-anchor sequences become ER membrane spanning helices. It is also required for the post-translational insertion of tail-anchored/TA proteins in endoplasmic reticulum membranes. By mediating the proper cotranslational insertion of N-terminal transmembrane domains in an N-exo topology, with translocated N-terminus in the lumen of the ER, controls the topology of multi-pass membrane proteins like the G protein-coupled receptors. By regulating the insertion of various proteins in membranes, it is indirectly involved in many cellular processes. The polypeptide is ER membrane protein complex subunit 9 (EMC9) (Homo sapiens (Human)).